The following is a 99-amino-acid chain: UPF0235 protein Sbal_3028 (99 aa).

The protein belongs to the UPF0235 family.

This is UPF0235 protein Sbal_3028 from Shewanella baltica (strain OS155 / ATCC BAA-1091).